We begin with the raw amino-acid sequence, 134 residues long: Small ribosomal subunit protein uS11 (134 aa).

The interval V115–L134 is disordered. Positions R125–L134 are enriched in basic residues.

It belongs to the universal ribosomal protein uS11 family.

The protein is Small ribosomal subunit protein uS11 (RPS14) of Syntrichia ruralis (Great hairy screw-moss).